The sequence spans 336 residues: Ketol-acid reductoisomerase (NADP(+)) 1 (336 aa).

The KARI N-terminal Rossmann domain occupies 2–181; sequence AKVYYEKDVT…GATRAGVLET (180 aa). NADP(+) is bound by residues 25 to 28, Arg-48, Ser-52, and 82 to 85; these read YGSQ and DELQ. The active site involves His-107. NADP(+) is bound at residue Gly-133. The KARI C-terminal knotted domain occupies 182 to 327; sequence TFKEETETDL…RKLREMMPFV (146 aa). Residues Asp-190, Glu-194, Glu-226, and Glu-230 each contribute to the Mg(2+) site. Ser-251 contributes to the substrate binding site.

Belongs to the ketol-acid reductoisomerase family. Mg(2+) is required as a cofactor.

It carries out the reaction (2R)-2,3-dihydroxy-3-methylbutanoate + NADP(+) = (2S)-2-acetolactate + NADPH + H(+). The catalysed reaction is (2R,3R)-2,3-dihydroxy-3-methylpentanoate + NADP(+) = (S)-2-ethyl-2-hydroxy-3-oxobutanoate + NADPH + H(+). Its pathway is amino-acid biosynthesis; L-isoleucine biosynthesis; L-isoleucine from 2-oxobutanoate: step 2/4. The protein operates within amino-acid biosynthesis; L-valine biosynthesis; L-valine from pyruvate: step 2/4. Involved in the biosynthesis of branched-chain amino acids (BCAA). Catalyzes an alkyl-migration followed by a ketol-acid reduction of (S)-2-acetolactate (S2AL) to yield (R)-2,3-dihydroxy-isovalerate. In the isomerase reaction, S2AL is rearranged via a Mg-dependent methyl migration to produce 3-hydroxy-3-methyl-2-ketobutyrate (HMKB). In the reductase reaction, this 2-ketoacid undergoes a metal-dependent reduction by NADPH to yield (R)-2,3-dihydroxy-isovalerate. This chain is Ketol-acid reductoisomerase (NADP(+)) 1, found in Bacillus thuringiensis subsp. konkukian (strain 97-27).